The sequence spans 135 residues: Ribosome-binding factor A (135 aa).

It belongs to the RbfA family. As to quaternary structure, monomer. Binds 30S ribosomal subunits, but not 50S ribosomal subunits or 70S ribosomes.

It localises to the cytoplasm. One of several proteins that assist in the late maturation steps of the functional core of the 30S ribosomal subunit. Associates with free 30S ribosomal subunits (but not with 30S subunits that are part of 70S ribosomes or polysomes). Required for efficient processing of 16S rRNA. May interact with the 5'-terminal helix region of 16S rRNA. This is Ribosome-binding factor A from Caldicellulosiruptor saccharolyticus (strain ATCC 43494 / DSM 8903 / Tp8T 6331).